The following is a 348-amino-acid chain: Phospho-N-acetylmuramoyl-pentapeptide-transferase (348 aa).

Transmembrane regions (helical) follow at residues 11-31, 67-87, 92-112, 128-148, 163-183, 198-218, 222-242, 251-271, 276-296, and 326-346; these read SLIL…IFLG, TAGG…LLPL, TWLF…DDIV, FIVQ…IDKE, IFLG…MLAI, GLAT…AIMS, PLAY…LAFL, VFMG…CAVM, LFLI…ILQV, and VVAR…VAAL.

This sequence belongs to the glycosyltransferase 4 family. MraY subfamily. It depends on Mg(2+) as a cofactor.

It is found in the cell inner membrane. It carries out the reaction UDP-N-acetyl-alpha-D-muramoyl-L-alanyl-gamma-D-glutamyl-meso-2,6-diaminopimeloyl-D-alanyl-D-alanine + di-trans,octa-cis-undecaprenyl phosphate = di-trans,octa-cis-undecaprenyl diphospho-N-acetyl-alpha-D-muramoyl-L-alanyl-D-glutamyl-meso-2,6-diaminopimeloyl-D-alanyl-D-alanine + UMP. It participates in cell wall biogenesis; peptidoglycan biosynthesis. Its function is as follows. Catalyzes the initial step of the lipid cycle reactions in the biosynthesis of the cell wall peptidoglycan: transfers peptidoglycan precursor phospho-MurNAc-pentapeptide from UDP-MurNAc-pentapeptide onto the lipid carrier undecaprenyl phosphate, yielding undecaprenyl-pyrophosphoryl-MurNAc-pentapeptide, known as lipid I. The polypeptide is Phospho-N-acetylmuramoyl-pentapeptide-transferase (Chlamydia felis (strain Fe/C-56) (Chlamydophila felis)).